The sequence spans 468 residues: Uronate isomerase (468 aa).

It belongs to the metallo-dependent hydrolases superfamily. Uronate isomerase family.

The catalysed reaction is D-glucuronate = D-fructuronate. It catalyses the reaction aldehydo-D-galacturonate = keto-D-tagaturonate. The protein operates within carbohydrate metabolism; pentose and glucuronate interconversion. In Endomicrobium trichonymphae, this protein is Uronate isomerase.